The chain runs to 274 residues: Reaction center protein L chain (274 aa).

Over 2–32 the chain is Cytoplasmic; the sequence is ALLSFERKYRVRGGTLIGGDLFDFWVGPYFV. A helical membrane pass occupies residues 33 to 53; sequence GFFGVSAIFFIFLGVSLIGYA. Topologically, residues 54-83 are periplasmic; it reads ASQGPTWDPFAISINPPDLKYGLGAAPLLE. A helical membrane pass occupies residues 84-111; it reads GGFWQAITVCALGAFISWMLREVEISRK. At 112 to 115 the chain is on the cytoplasmic side; it reads LGIG. Residues 116 to 139 traverse the membrane as a helical segment; that stretch reads WHVPLAFCVPIFMFCVLQVFRPLL. The Periplasmic portion of the chain corresponds to 140–170; sequence LGSWGHAFPYGILSHLDWVNNFGYQYLNWHY. 2 residues coordinate (7R,8Z)-bacteriochlorophyll b: His-154 and His-174. The chain crosses the membrane as a helical span at residues 171–198; that stretch reads NPGHMSSVSFLFVNAMALGLHGGLILSV. His-191 contributes to the Fe cation binding site. Residues 199–225 lie on the Cytoplasmic side of the membrane; that stretch reads ANPGDGDKVKTAEHENQYFRDVVGYSI. A ubiquinone is bound at residue Phe-217. Residues 226 to 249 form a helical membrane-spanning segment; that stretch reads GALSIHRLGLFLASNIFLTGAFGT. His-231 lines the Fe cation pocket. The Periplasmic portion of the chain corresponds to 250-274; it reads IASGPFWTRGWPEWWGWWLDIPFWS.

The protein belongs to the reaction center PufL/M/PsbA/D family. Reaction center is composed of four bacteriochlorophylls, two bacteriopheophytins, two ubiquinones, one iron, and three highly hydrophobic polypeptide chains (designated L, M, and H).

It is found in the cellular chromatophore membrane. Functionally, the reaction center is a membrane-bound complex that mediates the initial photochemical event in the electron transfer process of photosynthesis. This chain is Reaction center protein L chain (pufL), found in Blastochloris viridis (Rhodopseudomonas viridis).